Consider the following 163-residue polypeptide: Putative H/ACA ribonucleoprotein complex subunit 2-like protein (163 aa).

Positions 1-27 (MGKRNLDETMNESTVSEANGDATAPTT) are disordered.

This sequence belongs to the eukaryotic ribosomal protein eL8 family. As to quaternary structure, component of the small nucleolar ribonucleoprotein particle containing H/ACA-type snoRNAs (H/ACA snoRNPs).

It is found in the nucleus. The protein localises to the nucleolus. Required for ribosome biogenesis. Part of a complex which catalyzes pseudouridylation of rRNA. This involves the isomerization of uridine such that the ribose is subsequently attached to C5, instead of the normal N1. Pseudouridine ('psi') residues may serve to stabilize the conformation of rRNAs. This chain is Putative H/ACA ribonucleoprotein complex subunit 2-like protein, found in Caenorhabditis elegans.